The chain runs to 147 residues: Large ribosomal subunit protein uL15 (147 aa).

Residues 1 to 15 (MTDRVKKTRKLRGHV) show a composition bias toward basic residues. Residues 1 to 34 (MTDRVKKTRKLRGHVSHGYGRVGKHRKHSGGRGL) are disordered.

The protein belongs to the universal ribosomal protein uL15 family.

This Encephalitozoon cuniculi (strain GB-M1) (Microsporidian parasite) protein is Large ribosomal subunit protein uL15 (RPL27A).